A 489-amino-acid chain; its full sequence is 6-phosphogluconate dehydrogenase, decarboxylating 1 (489 aa).

NADP(+) is bound by residues 9-14 (GLAVMG) and 32-34 (NRT). S50 bears the Phosphoserine mark. Residues 74-76 (VKA) and N102 each bind NADP(+). Residues N102 and 128–130 (SGG) contribute to the substrate site. K182 acts as the Proton acceptor in catalysis. 185-186 (HN) is a substrate binding site. Catalysis depends on E189, which acts as the Proton donor. Y190, K259, R286, R446, and H452 together coordinate substrate.

The protein belongs to the 6-phosphogluconate dehydrogenase family. In terms of assembly, homodimer.

It localises to the cytoplasm. The enzyme catalyses 6-phospho-D-gluconate + NADP(+) = D-ribulose 5-phosphate + CO2 + NADPH. It participates in carbohydrate degradation; pentose phosphate pathway; D-ribulose 5-phosphate from D-glucose 6-phosphate (oxidative stage): step 3/3. Functionally, catalyzes the oxidative decarboxylation of 6-phosphogluconate to ribulose 5-phosphate and CO(2), with concomitant reduction of NADP to NADPH. The protein is 6-phosphogluconate dehydrogenase, decarboxylating 1 (GND1) of Saccharomyces cerevisiae (strain ATCC 204508 / S288c) (Baker's yeast).